Consider the following 349-residue polypeptide: Phenylalanine--tRNA ligase alpha subunit (349 aa).

Glutamate 259 serves as a coordination point for Mg(2+).

Belongs to the class-II aminoacyl-tRNA synthetase family. Phe-tRNA synthetase alpha subunit type 1 subfamily. As to quaternary structure, tetramer of two alpha and two beta subunits. Mg(2+) serves as cofactor.

The protein resides in the cytoplasm. It carries out the reaction tRNA(Phe) + L-phenylalanine + ATP = L-phenylalanyl-tRNA(Phe) + AMP + diphosphate + H(+). The protein is Phenylalanine--tRNA ligase alpha subunit of Lactobacillus gasseri (strain ATCC 33323 / DSM 20243 / BCRC 14619 / CIP 102991 / JCM 1131 / KCTC 3163 / NCIMB 11718 / NCTC 13722 / AM63).